We begin with the raw amino-acid sequence, 426 residues long: Serine--tRNA ligase (426 aa).

229–231 (TAE) is an L-serine binding site. ATP is bound by residues 260–262 (RKE) and Val-276. Glu-283 is a binding site for L-serine. Residue 349–352 (EVTS) participates in ATP binding. Thr-384 serves as a coordination point for L-serine.

It belongs to the class-II aminoacyl-tRNA synthetase family. Type-1 seryl-tRNA synthetase subfamily. Homodimer. The tRNA molecule binds across the dimer.

Its subcellular location is the cytoplasm. It carries out the reaction tRNA(Ser) + L-serine + ATP = L-seryl-tRNA(Ser) + AMP + diphosphate + H(+). It catalyses the reaction tRNA(Sec) + L-serine + ATP = L-seryl-tRNA(Sec) + AMP + diphosphate + H(+). The protein operates within aminoacyl-tRNA biosynthesis; selenocysteinyl-tRNA(Sec) biosynthesis; L-seryl-tRNA(Sec) from L-serine and tRNA(Sec): step 1/1. Catalyzes the attachment of serine to tRNA(Ser). Is also able to aminoacylate tRNA(Sec) with serine, to form the misacylated tRNA L-seryl-tRNA(Sec), which will be further converted into selenocysteinyl-tRNA(Sec). This is Serine--tRNA ligase from Treponema pallidum (strain Nichols).